The primary structure comprises 430 residues: Phosphomethylpyrimidine synthase (430 aa).

Substrate-binding positions include Asn-67, Met-96, Tyr-125, His-161, 183–185 (SRG), 224–227 (DALR), and Glu-263. Residue His-267 coordinates Zn(2+). Position 290 (Tyr-290) interacts with substrate. His-331 contacts Zn(2+). [4Fe-4S] cluster is bound by residues Cys-406, Cys-409, and Cys-413.

The protein belongs to the ThiC family. Homodimer. [4Fe-4S] cluster serves as cofactor.

The catalysed reaction is 5-amino-1-(5-phospho-beta-D-ribosyl)imidazole + S-adenosyl-L-methionine = 4-amino-2-methyl-5-(phosphooxymethyl)pyrimidine + CO + 5'-deoxyadenosine + formate + L-methionine + 3 H(+). It participates in cofactor biosynthesis; thiamine diphosphate biosynthesis. Functionally, catalyzes the synthesis of the hydroxymethylpyrimidine phosphate (HMP-P) moiety of thiamine from aminoimidazole ribotide (AIR) in a radical S-adenosyl-L-methionine (SAM)-dependent reaction. In Campylobacter jejuni (strain RM1221), this protein is Phosphomethylpyrimidine synthase.